A 144-amino-acid chain; its full sequence is Probable nucleoside diphosphate kinase 5 (144 aa).

Residues lysine 3, phenylalanine 51, arginine 79, threonine 85, arginine 99, and asparagine 109 each coordinate ATP. Histidine 112 acts as the Pros-phosphohistidine intermediate in catalysis.

It belongs to the NDK family.

It carries out the reaction a 2'-deoxyribonucleoside 5'-diphosphate + ATP = a 2'-deoxyribonucleoside 5'-triphosphate + ADP. The enzyme catalyses a ribonucleoside 5'-diphosphate + ATP = a ribonucleoside 5'-triphosphate + ADP. In terms of biological role, involved in the synthesis of nucleoside triphosphates other than ATP. The ATP gamma phosphate is transferred to the NDP beta phosphate via a ping-pong mechanism, using a phosphorylated active-site intermediate. In Arabidopsis thaliana (Mouse-ear cress), this protein is Probable nucleoside diphosphate kinase 5.